Here is a 909-residue protein sequence, read N- to C-terminus: E3 ubiquitin-protein ligase HACE1 (909 aa).

The segment at 1-21 (MERAMEQLNRLTRSLRRARTV) is N-terminal helix important for homodimerization. ANK repeat units follow at residues 23–55 (LPED…NSKF), 64–93 (VKRS…NPNY), 97–126 (SGCT…DVNI), 130–159 (EGLT…DVDV), 163–192 (MGQT…DINR), 196–226 (SGAT…YLPD), and 228–253 (NGVT…QYHP). Residues 398–433 (QDQDAASIPPFEPPGPGSYENLSTGTRESKPDALAG) are disordered. The HECT domain occupies 574–909 (NCAKLKQGIA…HCGSYGYTMA (336 aa)). The active-site Glycyl thioester intermediate is Cys-876.

In terms of assembly, homodimer. The homodimer is autoinhibited and stabilized by its N-terminal helix. Interacts with RAB1 (RAB1A, RAB1B or RAB1C), RAB4 (RAB4A or RAB4B) and RAB11 (RAB11A or RAB11B); in a GTP-dependent manner. Interacts with the 26S proteasomal complex through the 20S core proteasomal subunit. Interacts with RARB. In terms of processing, autoubiquitinated. Expressed in multiple tissues including heart, brain and kidney.

The protein resides in the golgi apparatus. The protein localises to the golgi stack membrane. It localises to the cytoplasm. Its subcellular location is the endoplasmic reticulum. The enzyme catalyses S-ubiquitinyl-[E2 ubiquitin-conjugating enzyme]-L-cysteine + [acceptor protein]-L-lysine = [E2 ubiquitin-conjugating enzyme]-L-cysteine + N(6)-ubiquitinyl-[acceptor protein]-L-lysine.. It functions in the pathway protein modification; protein ubiquitination. Sterically autoinhibited in its dimeric state. Its function is as follows. E3 ubiquitin-protein ligase involved in Golgi membrane fusion and regulation of small GTPases. Acts as a regulator of Golgi membrane dynamics during the cell cycle: recruited to Golgi membrane by Rab proteins and regulates postmitotic Golgi membrane fusion. Acts by mediating ubiquitination during mitotic Golgi disassembly, ubiquitination serving as a signal for Golgi reassembly later, after cell division. Specifically binds GTP-bound RAC1, mediating ubiquitination and subsequent degradation of active RAC1, thereby playing a role in host defense against pathogens. May also act as a transcription regulator via its interaction with RARB. This Homo sapiens (Human) protein is E3 ubiquitin-protein ligase HACE1 (HACE1).